The following is a 159-amino-acid chain: Sec-independent protein translocase protein TatB (159 aa).

The helical transmembrane segment at 1 to 21 threads the bilayer; that stretch reads MIDIGLSKMALIGAVALIVIG.

Belongs to the TatB family. As to quaternary structure, the Tat system comprises two distinct complexes: a TatABC complex, containing multiple copies of TatA, TatB and TatC subunits, and a separate TatA complex, containing only TatA subunits. Substrates initially bind to the TatABC complex, which probably triggers association of the separate TatA complex to form the active translocon.

It is found in the cell inner membrane. Part of the twin-arginine translocation (Tat) system that transports large folded proteins containing a characteristic twin-arginine motif in their signal peptide across membranes. Together with TatC, TatB is part of a receptor directly interacting with Tat signal peptides. TatB may form an oligomeric binding site that transiently accommodates folded Tat precursor proteins before their translocation. The sequence is that of Sec-independent protein translocase protein TatB from Acidovorax sp. (strain JS42).